The primary structure comprises 274 residues: MRKIAIYGKGGIGKSTTTQNTVAGLAEMGNKVMVVGCDPKADSTRLLLGGLTQKTVLDTLREEGEDVELEDIIKEGYGASRCTESGGPEPGVGCAGRGIITSVNLLEQLGAYDDEWGLDYVFYDVLGDVVCGGFAMPIRDGKAQEIYIVVSGEMMAMYAANNICKGILKYADAGGVRLGGLICNSRKVDNEREMIEELARQLGTQMIHFVPRDNMVQRAEINRKTVIDFDPSHNQADEYRALATKIDQNEMFVIPKPLEIEELEKLLIDFGIAN.

8 to 15 (GKGGIGKS) provides a ligand contact to ATP. Cys94 lines the [4Fe-4S] cluster pocket. An ADP-ribosylarginine; by dinitrogenase reductase ADP-ribosyltransferase modification is found at Arg97. A [4Fe-4S] cluster-binding site is contributed by Cys131.

It belongs to the NifH/BchL/ChlL family. As to quaternary structure, homodimer. Requires [4Fe-4S] cluster as cofactor. In terms of processing, the reversible ADP-ribosylation of Arg-97 inactivates the nitrogenase reductase and regulates nitrogenase activity.

It carries out the reaction N2 + 8 reduced [2Fe-2S]-[ferredoxin] + 16 ATP + 16 H2O = H2 + 8 oxidized [2Fe-2S]-[ferredoxin] + 2 NH4(+) + 16 ADP + 16 phosphate + 6 H(+). The key enzymatic reactions in nitrogen fixation are catalyzed by the nitrogenase complex, which has 2 components: the iron protein and the molybdenum-iron protein. The sequence is that of Nitrogenase iron protein from Prosthecochloris aestuarii (strain DSM 271 / SK 413).